A 234-amino-acid chain; its full sequence is MRLYLLPDDACIFPDVGEAGPDGLLAIGGDLTPERLLRAYEEGIFPWYGPGDPILWWSPDPRCVLPLDALHVPRRLMRTVRAKTFEVRLDTAFADVLEQCAATPRPGQGGTWLVPEMRAAYTRLHHLGHAHSVEAWYGGRLVGGLYGVALGGGFFGESMFHAMPDASKVAFVWLARLLVSWGFRFVDCQQTTSHMLRFGAVEMPRTDFLACLHDATRQPSRIGRWRLPQDFVPW.

Belongs to the L/F-transferase family.

The protein resides in the cytoplasm. It catalyses the reaction N-terminal L-lysyl-[protein] + L-leucyl-tRNA(Leu) = N-terminal L-leucyl-L-lysyl-[protein] + tRNA(Leu) + H(+). The enzyme catalyses N-terminal L-arginyl-[protein] + L-leucyl-tRNA(Leu) = N-terminal L-leucyl-L-arginyl-[protein] + tRNA(Leu) + H(+). It carries out the reaction L-phenylalanyl-tRNA(Phe) + an N-terminal L-alpha-aminoacyl-[protein] = an N-terminal L-phenylalanyl-L-alpha-aminoacyl-[protein] + tRNA(Phe). Its function is as follows. Functions in the N-end rule pathway of protein degradation where it conjugates Leu, Phe and, less efficiently, Met from aminoacyl-tRNAs to the N-termini of proteins containing an N-terminal arginine or lysine. The polypeptide is Leucyl/phenylalanyl-tRNA--protein transferase (Nitratidesulfovibrio vulgaris (strain ATCC 29579 / DSM 644 / CCUG 34227 / NCIMB 8303 / VKM B-1760 / Hildenborough) (Desulfovibrio vulgaris)).